We begin with the raw amino-acid sequence, 969 residues long: Translation initiation factor IF-2 (969 aa).

Residues 49 to 63 (HLRKSHGATDGDKRK) are compositionally biased toward basic and acidic residues. Disordered regions lie at residues 49–85 (HLRK…KART), 100–128 (DDVS…REEE), and 143–380 (LRER…SFQA). Over residues 105–114 (VAEQGQAQVA) the composition is skewed to low complexity. Residues 143–181 (LRERQERLEREEAERRAREEAAEAERRRAEEEAAAKRAA) show a composition bias toward basic and acidic residues. Low complexity predominate over residues 182 to 206 (AEAAAAQQAAQQAAAAQQAAAPADS). Positions 209 to 260 (DEARAAAERAAQREAAKKAEDAAREAAEKARAEQEEIRKRREAAEAEARAIR) are enriched in basic and acidic residues. The segment covering 301–323 (AQARPAAKKPAAAPAATPAPAGA) has biased composition (low complexity). Over residues 353–366 (SSGGVDRGWRGGPK) the composition is skewed to gly residues. A tr-type G domain is found at 469–638 (PRPPVVTVMG…LLQAEVLELK (170 aa)). The G1 stretch occupies residues 478–485 (GHVDHGKT). Position 478 to 485 (478 to 485 (GHVDHGKT)) interacts with GTP. The tract at residues 503–507 (GITQH) is G2. Positions 524-527 (DTPG) are G3. Residues 524-528 (DTPGH) and 578-581 (NKID) each bind GTP. A G4 region spans residues 578–581 (NKID). The segment at 614–616 (SAK) is G5.

It belongs to the TRAFAC class translation factor GTPase superfamily. Classic translation factor GTPase family. IF-2 subfamily.

Its subcellular location is the cytoplasm. Functionally, one of the essential components for the initiation of protein synthesis. Protects formylmethionyl-tRNA from spontaneous hydrolysis and promotes its binding to the 30S ribosomal subunits. Also involved in the hydrolysis of GTP during the formation of the 70S ribosomal complex. In Burkholderia multivorans (strain ATCC 17616 / 249), this protein is Translation initiation factor IF-2.